A 123-amino-acid polypeptide reads, in one-letter code: UPF0102 protein PSPPH_4120 (123 aa).

The protein belongs to the UPF0102 family.

The protein is UPF0102 protein PSPPH_4120 of Pseudomonas savastanoi pv. phaseolicola (strain 1448A / Race 6) (Pseudomonas syringae pv. phaseolicola (strain 1448A / Race 6)).